Reading from the N-terminus, the 391-residue chain is Phosphoglycerate kinase (391 aa).

Residues 21–23, R36, 59–62, R113, and R146 contribute to the substrate site; these read DLN and HLGR. Residues K197, E319, and 345 to 348 contribute to the ATP site; that span reads GGDT.

The protein belongs to the phosphoglycerate kinase family. In terms of assembly, monomer.

Its subcellular location is the cytoplasm. The catalysed reaction is (2R)-3-phosphoglycerate + ATP = (2R)-3-phospho-glyceroyl phosphate + ADP. Its pathway is carbohydrate degradation; glycolysis; pyruvate from D-glyceraldehyde 3-phosphate: step 2/5. The chain is Phosphoglycerate kinase from Xanthomonas oryzae pv. oryzae (strain MAFF 311018).